A 593-amino-acid chain; its full sequence is uncharacterized protein (593 aa).

Helical transmembrane passes span 21–41 (PAVF…SVVY), 60–80 (VGWW…YCGI), 97–117 (FSFW…GLVF), 148–168 (MALT…VVGL), 204–224 (VDVI…GFGI), 243–263 (WMVG…VSGV), 275–295 (MALA…LFLL), 328–348 (WTIF…MFIA), 359–379 (FIGA…TIFG), 410–430 (GLPI…FFFV), 457–477 (VYWA…GGAG), and 485–505 (AAIA…YAMT).

It belongs to the BCCT transporter (TC 2.A.15) family.

It localises to the cell membrane. This is an uncharacterized protein from Mycobacterium tuberculosis (strain CDC 1551 / Oshkosh).